The following is a 954-amino-acid chain: Glycine dehydrogenase (decarboxylating) (954 aa).

N6-(pyridoxal phosphate)lysine is present on Lys-704.

This sequence belongs to the GcvP family. As to quaternary structure, the glycine cleavage system is composed of four proteins: P, T, L and H. Pyridoxal 5'-phosphate serves as cofactor.

The enzyme catalyses N(6)-[(R)-lipoyl]-L-lysyl-[glycine-cleavage complex H protein] + glycine + H(+) = N(6)-[(R)-S(8)-aminomethyldihydrolipoyl]-L-lysyl-[glycine-cleavage complex H protein] + CO2. The glycine cleavage system catalyzes the degradation of glycine. The P protein binds the alpha-amino group of glycine through its pyridoxal phosphate cofactor; CO(2) is released and the remaining methylamine moiety is then transferred to the lipoamide cofactor of the H protein. In Rhizobium johnstonii (strain DSM 114642 / LMG 32736 / 3841) (Rhizobium leguminosarum bv. viciae), this protein is Glycine dehydrogenase (decarboxylating).